The sequence spans 232 residues: Ion-translocating oxidoreductase complex subunit E (232 aa).

5 consecutive transmembrane segments (helical) span residues 39–59 (LGLG…ISLV), 69–89 (IPVF…LVNA), 93–113 (GLYM…IIIG), 128–148 (AFDG…LGAT), and 182–202 (SFLL…LIAL).

The protein belongs to the NqrDE/RnfAE family. As to quaternary structure, the complex is composed of six subunits: RnfA, RnfB, RnfC, RnfD, RnfE and RnfG.

The protein localises to the cell inner membrane. Part of a membrane-bound complex that couples electron transfer with translocation of ions across the membrane. This chain is Ion-translocating oxidoreductase complex subunit E, found in Shewanella oneidensis (strain ATCC 700550 / JCM 31522 / CIP 106686 / LMG 19005 / NCIMB 14063 / MR-1).